The primary structure comprises 374 residues: Muconate cycloisomerase 1 (374 aa).

Belongs to the cycloisomerase 2 family. In terms of assembly, homotetramer.

The catalysed reaction is (S)-muconolactone = cis,cis-muconate + H(+). It functions in the pathway aromatic compound metabolism; beta-ketoadipate pathway; 5-oxo-4,5-dihydro-2-furylacetate from catechol: step 2/3. Its function is as follows. Catalyzes a syn cycloisomerization. This Cutaneotrichosporon cutaneum (Yeast) protein is Muconate cycloisomerase 1.